Consider the following 389-residue polypeptide: tRNA N(3)-cytidine methyltransferase METTL2 (389 aa).

Positions 1–20 are disordered; that stretch reads MAASFPEGVPETEDGKRPQF. Positions 78, 82, 181, 206, 232, 233, and 253 each coordinate S-adenosyl-L-methionine.

The protein belongs to the methyltransferase superfamily. METL family. As to quaternary structure, monomer. Interacts with DALRD3.

The protein resides in the cytoplasm. It carries out the reaction cytidine(32) in tRNA(Thr) + S-adenosyl-L-methionine = N(3)-methylcytidine(32) in tRNA(Thr) + S-adenosyl-L-homocysteine + H(+). It catalyses the reaction cytidine(32) in tRNA(Arg)(CCU) + S-adenosyl-L-methionine = N(3)-methylcytidine(32) in tRNA(Arg)(CCU) + S-adenosyl-L-homocysteine + H(+). S-adenosyl-L-methionine-dependent methyltransferase that mediates N(3)-methylcytidine modification of residue 32 of the tRNA anticodon loop of tRNA(Thr)(UGU) and tRNA(Arg)(CCU). N(3)-methylcytidine methylation by METTL2 requires the N6-threonylcarbamoylation of tRNA (t6A37) by the EKC/KEOPS complex as prerequisite. This chain is tRNA N(3)-cytidine methyltransferase METTL2, found in Mus musculus (Mouse).